The chain runs to 285 residues: Chlorite dismutase (285 aa).

Residues 1 to 38 form the signal peptide; it reads MKVRCVSLVAAGLLTIAGSAIGQPAPAPMPAMAPAAKP. Glu105 lines the Ca(2+) pocket. Position 205 (His205) interacts with heme. The active-site Proton acceptor is the Arg218. 2 residues coordinate Ca(2+): Asp227 and Thr266.

This sequence belongs to the chlorite dismutase family. In terms of assembly, homopentamer. The cofactor is heme b.

The protein resides in the periplasm. It carries out the reaction chloride + O2 = chlorite. Functionally, catalyzes the heme-dependent decomposition of chlorite to O(2) and chloride with high efficiency and specificity. Used to detoxify chlorite, a by-product of the reduction of perchlorate, a primarily anthropogenic pollutant, in perchlorate-respiring bacteria. In Ideonella dechloratans, this protein is Chlorite dismutase (cld).